The primary structure comprises 355 residues: MSIIINNVSKQFGDFTALKDINLEVPDGKLVALLGPSGSGKSTLLRAIAGLEEPDQGQIIINGQDATHVDIRKRNIGFVFQHYALFKHLTIRQNIAFGLEIRKHPPAKTKERVEELLSLIQLEGLGNRYPSQLSGGQRQRVALARALAVQPQVLLLDEPFGALDAKVRKELRAWLRKLHDEVHLTSVFVTHDQEEAMEVADEIVVMSNGKIEQVGTAEEIYEHPASPFVMGFIGEVNVLPRNASLFNYHAFEPHSSNNGHQEPVFVRPHDFELLTEADDASVAGTIKRVIHLGSEIQVEVLLMDNTAVLAYLNREQGQQLNPKAGKKVFIKPRVAKVFAGASSAASTHFIYGTGI.

The ABC transporter domain maps to 3-233 (IIINNVSKQF…PASPFVMGFI (231 aa)). Residue 35–42 (GPSGSGKS) coordinates ATP.

It belongs to the ABC transporter superfamily. Sulfate/tungstate importer (TC 3.A.1.6) family. As to quaternary structure, the complex is composed of two ATP-binding proteins (CysA), two transmembrane proteins (CysT and CysW) and a solute-binding protein (CysP).

The protein resides in the cell inner membrane. The catalysed reaction is sulfate(out) + ATP + H2O = sulfate(in) + ADP + phosphate + H(+). It carries out the reaction thiosulfate(out) + ATP + H2O = thiosulfate(in) + ADP + phosphate + H(+). Part of the ABC transporter complex CysAWTP involved in sulfate/thiosulfate import. Responsible for energy coupling to the transport system. The polypeptide is Sulfate/thiosulfate import ATP-binding protein CysA (Synechocystis sp. (strain ATCC 27184 / PCC 6803 / Kazusa)).